A 319-amino-acid chain; its full sequence is Replication factor C small subunit 2 (319 aa).

44–51 (GPPGTGKT) provides a ligand contact to ATP.

It belongs to the activator 1 small subunits family. RfcS subfamily. As to quaternary structure, heteromultimer composed of small subunits (RfcS) and large subunits (RfcL).

In terms of biological role, part of the RFC clamp loader complex which loads the PCNA sliding clamp onto DNA. The sequence is that of Replication factor C small subunit 2 from Pyrobaculum aerophilum (strain ATCC 51768 / DSM 7523 / JCM 9630 / CIP 104966 / NBRC 100827 / IM2).